The sequence spans 218 residues: Putative NAD(P)H nitroreductase SH0546 (218 aa).

This sequence belongs to the nitroreductase family. FMN is required as a cofactor.

The chain is Putative NAD(P)H nitroreductase SH0546 from Staphylococcus haemolyticus (strain JCSC1435).